The primary structure comprises 171 residues: Putative antiporter subunit mnhG2 (171 aa).

3 consecutive transmembrane segments (helical) span residues 11-31, 51-71, and 72-92; these read IAAL…IGIV, VLLT…FFSV, and RLLL…HLVA. A compositionally biased stretch (basic and acidic residues) spans 144 to 156; the sequence is DVQKQRQKEKQQE. A disordered region spans residues 144 to 171; the sequence is DVQKQRQKEKQQEENIESLSEARRETKD.

Belongs to the CPA3 antiporters (TC 2.A.63) subunit G family. As to quaternary structure, may form a heterooligomeric complex that consists of seven subunits: mnhA2, mnhB2, mnhC2, mnhD2, mnhE2, mnhF2 and mnhG2.

The protein resides in the cell membrane. The protein is Putative antiporter subunit mnhG2 (mnhG2) of Staphylococcus haemolyticus (strain JCSC1435).